Here is a 331-residue protein sequence, read N- to C-terminus: PIN2/TERF1-interacting telomerase inhibitor 1 (331 aa).

Disordered stretches follow at residues 1-28 (MSMLAERRRKQKWAVDPRNTAWSNDDSK), 156-175 (AQDGCSNSTADEADTSLTTT), and 197-331 (SKSQ…KVSR). The 47-residue stretch at 26–72 (DSKFGQKMLEKMGWSKGKGLGAQEQGATEHIKVKVKNNHLGLGATNN) folds into the G-patch domain. Residue Ser233 is modified to Phosphoserine. Basic residues predominate over residues 236 to 246 (HKAKRHKKKKR). Positions 247–261 (VEAERGPAAKKRDQV) are enriched in basic and acidic residues. The interval 254 to 328 (AAKKRDQVEL…DSAPVKKKKK (75 aa)) is telomerase inhibitory domain (TID). 3 positions are modified to phosphoserine: Ser269, Ser274, and Ser277. The TBM signature appears at 291 to 301 (QDDVPKPRKRR). Residues 297–306 (PRKRRAKKTL) are compositionally biased toward basic residues.

This sequence belongs to the PINX1 family. As to quaternary structure, interacts with MCRS1, TERT, TERF1, NCL/nucleolin, and the telomerase RNA.

The protein resides in the nucleus. It is found in the nucleolus. The protein localises to the chromosome. Its subcellular location is the telomere. It localises to the centromere. The protein resides in the kinetochore. Functionally, microtubule-binding protein essential for faithful chromosome segregation. Mediates TRF1 and TERT accumulation in nucleolus and enhances TRF1 binding to telomeres. Inhibits telomerase activity. May inhibit cell proliferation and act as tumor suppressor. The chain is PIN2/TERF1-interacting telomerase inhibitor 1 from Rattus norvegicus (Rat).